A 162-amino-acid polypeptide reads, in one-letter code: Chemoreceptor glutamine deamidase CheD (162 aa).

Belongs to the CheD family. As to quaternary structure, forms a complex with CheC.

The enzyme catalyses L-glutaminyl-[protein] + H2O = L-glutamyl-[protein] + NH4(+). Functionally, deamidates glutamine residues to glutamate on methyl-accepting chemotaxis receptors (MCPs). CheD-mediated MCP deamidation is required for productive communication of the conformational signals of the chemoreceptors to the CheA kinase. The protein is Chemoreceptor glutamine deamidase CheD of Halalkalibacterium halodurans (strain ATCC BAA-125 / DSM 18197 / FERM 7344 / JCM 9153 / C-125) (Bacillus halodurans).